An 808-amino-acid chain; its full sequence is Probable potassium transporter 3 (808 aa).

Residues 1-34 lie on the Cytoplasmic side of the membrane; that stretch reads MPVADCESGLSPADVTGAGAANGNPGHWRSYYRH. Residues 35 to 55 traverse the membrane as a helical segment; that stretch reads VLLLAYQSCGVVYGDLSTSPL. Over 56–81 the chain is Extracellular; the sequence is YVYKSTFIIGSLRRFQDEEIVFGVFS. The chain crosses the membrane as a helical span at residues 82 to 102; sequence LVFWTLTLIPLLKYVFIVLAA. Residues 103-167 lie on the Cytoplasmic side of the membrane; the sequence is DDNGEGGTFA…FLENHRKSRT (65 aa). The helical transmembrane segment at 168–188 threads the bilayer; it reads FLLVTVLFGASLVIGDGVLTP. The Extracellular segment spans residues 189 to 204; it reads PMSVLSSFSGLQVHST. The chain crosses the membrane as a helical span at residues 205 to 225; it reads ALTSGEVEILSCTVLVCLFMV. At 226 to 232 the chain is on the cytoplasmic side; that stretch reads QHWGTHR. The chain crosses the membrane as a helical span at residues 233 to 253; sequence VAFLFAPVVIVWLLLLGALGV. Over 254 to 283 the chain is Extracellular; the sequence is YNIVVWNPRVLRALSPYYLVRFFQHTGKDG. A helical membrane pass occupies residues 284–304; the sequence is WISLGGILLSMTGTEAMYADL. Over 305-313 the chain is Cytoplasmic; it reads GHFTAASIR. Residues 314 to 334 traverse the membrane as a helical segment; it reads VAFVGLIYPCLVLQYMGQAAF. The Extracellular portion of the chain corresponds to 335–354; the sequence is LSKSPHCDIHFVFFESIPTG. The helical transmembrane segment at 355-375 threads the bilayer; sequence IFWPVLVIATLAAIVGSQAVI. Topologically, residues 376 to 406 are cytoplasmic; sequence SATFSIVRQCTALGCFPRVKIVHTSRRIHGQ. A helical transmembrane segment spans residues 407 to 427; sequence IYSPEINWILMLLCIAVTMGL. Residues 428–439 are Extracellular-facing; the sequence is RDTTLIGNAYGM. Residues 440 to 460 form a helical membrane-spanning segment; the sequence is ACAGVMLVTTLLMALVIVFVW. At 461–464 the chain is on the cytoplasmic side; sequence QYSC. Residues 465–485 traverse the membrane as a helical segment; it reads LVAALFLVAFGVVEAVYLSAA. Topologically, residues 486–491 are extracellular; it reads LMKVPQ. A helical membrane pass occupies residues 492 to 512; the sequence is GGWLPLVLSLVFVAVMYVWHY. At 513-808 the chain is on the cytoplasmic side; sequence GTRRKHQFDV…LIEVGMIYYV (296 aa).

It belongs to the HAK/KUP transporter (TC 2.A.72.3) family.

The protein resides in the membrane. High-affinity potassium transporter. This is Probable potassium transporter 3 (HAK3) from Oryza sativa subsp. japonica (Rice).